Consider the following 320-residue polypeptide: Transcription factor bHLH96 (320 aa).

Residues 30–121 (EEEDQDPQDT…RSSKNKEEIE (92 aa)) form a disordered region. Over residues 65-76 (YSDDYNYNEEDL) the composition is skewed to acidic residues. The segment covering 104–114 (GRRKRRRTRSS) has biased composition (basic residues). One can recognise a bHLH domain in the interval 122-173 (NQRMTHIAVERNRRKQMNEYLAVLRSLMPPYYAQRGDQASIVGGAINYLKEL). A disordered region spans residues 184-206 (VKTATEDTGAGHDQTKTTSASSS). The ACT domain occupies 244–320 (SLKILAKKRP…RRIEEESSFS (77 aa)).

Homodimer. As to expression, expressed constitutively in roots, leaves, stems, and flowers.

It is found in the nucleus. This chain is Transcription factor bHLH96 (BHLH96), found in Arabidopsis thaliana (Mouse-ear cress).